A 191-amino-acid chain; its full sequence is Potassium-transporting ATPase KdpC subunit (191 aa).

Residues Pro6 to Thr26 traverse the membrane as a helical segment.

The protein belongs to the KdpC family. The system is composed of three essential subunits: KdpA, KdpB and KdpC.

The protein localises to the cell inner membrane. Functionally, part of the high-affinity ATP-driven potassium transport (or Kdp) system, which catalyzes the hydrolysis of ATP coupled with the electrogenic transport of potassium into the cytoplasm. This subunit acts as a catalytic chaperone that increases the ATP-binding affinity of the ATP-hydrolyzing subunit KdpB by the formation of a transient KdpB/KdpC/ATP ternary complex. The polypeptide is Potassium-transporting ATPase KdpC subunit (Enterobacter sp. (strain 638)).